We begin with the raw amino-acid sequence, 292 residues long: MKRIALFLLTNVAVVVVLGIVASLLGVNRYLTANGLNLGALLGFAFIMGFGGAIISLLMSKPIAKMSMGVTIINAPRNGDEAWIVETVRAFSEKAGIQMPEVGIYEGEPNAFATGAFKNSALVAVSTGLLQGMTREEVEAVIGHEVAHVANGDMVTMALIQGVMNTFVVFLSRVIGYAVDSFLRRNDENSSGPGIGYMITTIVLDIVLGFLAAIIVAWFSRQREFRADAGAAQLMGRKQPMINALHRLGGMRPGAMPQSLQAMGITGNIGKLFSSHPPIEERVAALQNSQSA.

Helical transmembrane passes span 4–24 and 38–58; these read IALF…VASL and LGAL…ISLL. His144 lines the Zn(2+) pocket. The active site involves Glu145. His148 contributes to the Zn(2+) binding site. The next 2 helical transmembrane spans lie at 152–172 and 199–219; these read GDMV…VFLS and ITTI…VAWF. Glu224 contributes to the Zn(2+) binding site.

Belongs to the peptidase M48B family. Zn(2+) is required as a cofactor.

It localises to the cell inner membrane. The sequence is that of Protease HtpX homolog from Acidovorax ebreus (strain TPSY) (Diaphorobacter sp. (strain TPSY)).